A 380-amino-acid chain; its full sequence is Putative glutamate--cysteine ligase 2-1 (380 aa).

The protein belongs to the glutamate--cysteine ligase type 2 family. YbdK subfamily.

The catalysed reaction is L-cysteine + L-glutamate + ATP = gamma-L-glutamyl-L-cysteine + ADP + phosphate + H(+). Its function is as follows. ATP-dependent carboxylate-amine ligase which exhibits weak glutamate--cysteine ligase activity. The chain is Putative glutamate--cysteine ligase 2-1 from Mycolicibacterium vanbaalenii (strain DSM 7251 / JCM 13017 / BCRC 16820 / KCTC 9966 / NRRL B-24157 / PYR-1) (Mycobacterium vanbaalenii).